The following is a 536-amino-acid chain: ATP synthase subunit alpha, mitochondrial (536 aa).

A mitochondrion-targeting transit peptide spans 1 to 27; that stretch reads MLRQAGTRLLKVPVCGLRPSITLKRGY. 197 to 204 is an ATP binding site; the sequence is GDRQTGKT.

It belongs to the ATPase alpha/beta chains family. In terms of assembly, F-type ATPases have 2 components, CF(1) - the catalytic core - and CF(0) - the membrane proton channel. CF(1) has five subunits: alpha(3), beta(3), gamma(1), delta(1), epsilon(1). CF(0) has three main subunits: a, b and c.

The protein localises to the mitochondrion. Its subcellular location is the mitochondrion inner membrane. In terms of biological role, mitochondrial membrane ATP synthase (F(1)F(0) ATP synthase or Complex V) produces ATP from ADP in the presence of a proton gradient across the membrane which is generated by electron transport complexes of the respiratory chain. F-type ATPases consist of two structural domains, F(1) - containing the extramembraneous catalytic core, and F(0) - containing the membrane proton channel, linked together by a central stalk and a peripheral stalk. During catalysis, ATP synthesis in the catalytic domain of F(1) is coupled via a rotary mechanism of the central stalk subunits to proton translocation. Subunits alpha and beta form the catalytic core in F(1). Rotation of the central stalk against the surrounding alpha(3)beta(3) subunits leads to hydrolysis of ATP in three separate catalytic sites on the beta subunits. Subunit alpha does not bear the catalytic high-affinity ATP-binding sites. The polypeptide is ATP synthase subunit alpha, mitochondrial (atp1) (Schizosaccharomyces pombe (strain 972 / ATCC 24843) (Fission yeast)).